The primary structure comprises 362 residues: Prostaglandin E2 receptor EP2 subtype (362 aa).

At 1 to 24 (MDNFLNDSKLMEDCKSRQWLLSGE) the chain is on the extracellular side. A glycan (N-linked (GlcNAc...) asparagine) is linked at asparagine 6. A helical transmembrane segment spans residues 25–48 (SPAISSVMFSAGVLGNLIALALLA). Residues 49–66 (RRWRGDTGCSAGSRTSIS) lie on the Cytoplasmic side of the membrane. A helical transmembrane segment spans residues 67-92 (LFHVLVTELVLTDLLGTCLISPVVLA). Over 93 to 112 (SYSRNQTLVALAPESHACTY) the chain is Extracellular. An intrachain disulfide couples cysteine 110 to cysteine 188. Residues 113-133 (FAFTMTFFSLATMLMLFAMAL) form a helical membrane-spanning segment. Residues 134-152 (ERYLSIGYPYFYRRHLSRR) are Cytoplasmic-facing. The helical transmembrane segment at 153 to 177 (GGLAVLPVIYGASLLFCSLPLLNYG) threads the bilayer. The Extracellular segment spans residues 178–199 (EYVQYCPGTWCFIRHGRTAYLQ). Residues 200 to 224 (LYATMLLLLIVAVLACNISVILNLI) traverse the membrane as a helical segment. Over 225–262 (RMHRRSRRSRCGLSGSSLRGPGSRRRGERTSMAEETDH) the chain is Cytoplasmic. A disordered region spans residues 234–255 (RCGLSGSSLRGPGSRRRGERTS). A compositionally biased stretch (low complexity) spans 235–245 (CGLSGSSLRGP). Residues 263–286 (LILLAIMTITFAICSLPFTIFAYM) traverse the membrane as a helical segment. At 287–299 (DETSSLKEKWDLR) the chain is on the extracellular side. Residues 300 to 323 (ALRFLSVNSIIDPWVFAILRPPVL) form a helical membrane-spanning segment. Residues 324–362 (RLMRSVLCCRTSLRTQEAQQTSCSTQSSASKQTDLCGQL) are Cytoplasmic-facing.

The protein belongs to the G-protein coupled receptor 1 family.

The protein localises to the cell membrane. Receptor for prostaglandin E2 (PGE2). The activity of this receptor is mediated by G(s) proteins that stimulate adenylate cyclase. The subsequent raise in intracellular cAMP is responsible for the relaxing effect of this receptor on smooth muscle. The protein is Prostaglandin E2 receptor EP2 subtype (Ptger2) of Mus musculus (Mouse).